The primary structure comprises 535 residues: Putative cysteine ligase BshC (535 aa).

Residues 420–477 (DTFKALKESINSAYKNLQEKLAPLGADFQKLTGENLGRVMAQVKYLEERAQKYHREKN) are a coiled coil.

The protein belongs to the BshC family.

Its function is as follows. Involved in bacillithiol (BSH) biosynthesis. May catalyze the last step of the pathway, the addition of cysteine to glucosamine malate (GlcN-Mal) to generate BSH. The sequence is that of Putative cysteine ligase BshC from Carboxydothermus hydrogenoformans (strain ATCC BAA-161 / DSM 6008 / Z-2901).